We begin with the raw amino-acid sequence, 35 residues long: Somatostatin (35 aa).

A disulfide bridge links cysteine 24 with cysteine 35.

Belongs to the somatostatin family.

Its subcellular location is the secreted. In terms of biological role, somatostatin inhibits the release of somatotropin. The sequence is that of Somatostatin (sst) from Lampetra fluviatilis (European river lamprey).